Reading from the N-terminus, the 247-residue chain is Cell division protein ZapD (247 aa).

This sequence belongs to the ZapD family. Interacts with FtsZ.

It localises to the cytoplasm. Functionally, cell division factor that enhances FtsZ-ring assembly. Directly interacts with FtsZ and promotes bundling of FtsZ protofilaments, with a reduction in FtsZ GTPase activity. This is Cell division protein ZapD from Salmonella agona (strain SL483).